Reading from the N-terminus, the 210-residue chain is Large ribosomal subunit protein uL3 (210 aa).

The tract at residues 131-154 (GPMSHGSKYHRRVGSMGATTDPGR) is disordered.

Belongs to the universal ribosomal protein uL3 family. In terms of assembly, part of the 50S ribosomal subunit. Forms a cluster with proteins L14 and L19.

Its function is as follows. One of the primary rRNA binding proteins, it binds directly near the 3'-end of the 23S rRNA, where it nucleates assembly of the 50S subunit. In Thermoanaerobacter pseudethanolicus (strain ATCC 33223 / 39E) (Clostridium thermohydrosulfuricum), this protein is Large ribosomal subunit protein uL3.